A 113-amino-acid polypeptide reads, in one-letter code: uncharacterized protein (113 aa).

A signal peptide spans 1–19 (MLSPLSPRIIAAFTTAVGA).

This sequence to M.tuberculosis Rv1291c.

This is an uncharacterized protein from Mycobacterium tuberculosis (strain CDC 1551 / Oshkosh).